The sequence spans 238 residues: MSEVTTAEFNEEGKYLRKIRSFVLREGRLTKGQAQAIESQWPTMGLDYSPTPLVLSDVFGREADTVLEIGFGMGASLVQMAKDAPEQNFIGIEVHKPGVGSCLSDAAIAGVTNLRVYHHDAMEVLEHAIADGSLARVQLFFPDPWHKKRHHKRRIVQAEFAELIRRKLKIGGVFHMATDWEEYSEHMLEVMQAAPGYQNQSSDGTVVPRPDHRPLTKFEARGHRLGHGVWDLMFERIA.

S-adenosyl-L-methionine is bound by residues Glu-68, Glu-93, Asp-120, and Asp-143. The active site involves Asp-143. Substrate contacts are provided by residues Lys-147, Asp-179, and Thr-216–Glu-219.

It belongs to the class I-like SAM-binding methyltransferase superfamily. TrmB family.

It catalyses the reaction guanosine(46) in tRNA + S-adenosyl-L-methionine = N(7)-methylguanosine(46) in tRNA + S-adenosyl-L-homocysteine. It functions in the pathway tRNA modification; N(7)-methylguanine-tRNA biosynthesis. In terms of biological role, catalyzes the formation of N(7)-methylguanine at position 46 (m7G46) in tRNA. The chain is tRNA (guanine-N(7)-)-methyltransferase from Shewanella baltica (strain OS155 / ATCC BAA-1091).